The following is a 168-amino-acid chain: Cell division inhibitor SulA (168 aa).

Positions 105–111 are ftsZ binding; it reads ALQTGNY.

This sequence belongs to the SulA family. In terms of assembly, interacts with FtsZ. Is rapidly cleaved and degraded by the Lon protease once DNA damage is repaired.

Functionally, component of the SOS system and an inhibitor of cell division. Accumulation of SulA causes rapid cessation of cell division and the appearance of long, non-septate filaments. In the presence of GTP, binds a polymerization-competent form of FtsZ in a 1:1 ratio, thus inhibiting FtsZ polymerization and therefore preventing it from participating in the assembly of the Z ring. This mechanism prevents the premature segregation of damaged DNA to daughter cells during cell division. The sequence is that of Cell division inhibitor SulA from Erwinia pyrifoliae (strain DSM 12163 / CIP 106111 / Ep16/96).